We begin with the raw amino-acid sequence, 699 residues long: Long-chain-fatty-acid--CoA ligase 1 (699 aa).

Methionine 1 carries the N-acetylmethionine modification. Residue tyrosine 9 is modified to 3'-nitrotyrosine. The chain crosses the membrane as a helical; Signal-anchor for type III membrane protein span at residues 25 to 45 (LPTNTLMGFGAFAALTTFWYA). The Cytoplasmic portion of the chain corresponds to 46–699 (TRPKALKPPC…IDELYATIKI (654 aa)). Tyrosine 85 carries the post-translational modification Phosphotyrosine. Tyrosine 86 bears the 3'-nitrotyrosine mark. O-linked (GlcNAc) serine glycosylation occurs at serine 136. Residues lysine 208, lysine 357, and lysine 387 each carry the N6-acetyllysine modification. The residue at position 621 (serine 621) is a Phosphoserine. The residue at position 633 (lysine 633) is an N6-acetyllysine.

It belongs to the ATP-dependent AMP-binding enzyme family. Mg(2+) serves as cofactor.

The protein resides in the mitochondrion outer membrane. Its subcellular location is the peroxisome membrane. It is found in the microsome membrane. The protein localises to the endoplasmic reticulum membrane. The catalysed reaction is a long-chain fatty acid + ATP + CoA = a long-chain fatty acyl-CoA + AMP + diphosphate. It carries out the reaction (5Z,8Z,11Z,14Z)-eicosatetraenoate + ATP + CoA = (5Z,8Z,11Z,14Z)-eicosatetraenoyl-CoA + AMP + diphosphate. The enzyme catalyses 3,7,11,15-tetramethylhexadecanoate + ATP + CoA = phytanoyl-CoA + AMP + diphosphate. It catalyses the reaction hexadecanoate + ATP + CoA = hexadecanoyl-CoA + AMP + diphosphate. The catalysed reaction is (E)-hexadec-2-enoate + ATP + CoA = (2E)-hexadecenoyl-CoA + AMP + diphosphate. It carries out the reaction 2,6,10,14-tetramethylpentadecanoate + ATP + CoA = pristanoyl-CoA + AMP + diphosphate. The enzyme catalyses 14,15-epoxy-(5Z,8Z,11Z)-eicosatrienoate + ATP + CoA = 14,15-epoxy-(5Z,8Z,11Z)-eicosatrienoyl-CoA + AMP + diphosphate. It catalyses the reaction 5-hydroxy-(6E,8Z,11Z,14Z)-eicosatetraenoate + ATP + CoA = 5-hydroxy-(6E,8Z,11Z,14Z)-eicosatetraenoyl-CoA + AMP + diphosphate. The catalysed reaction is 12-hydroxy-(5Z,8Z,10E,14Z)-eicosatetraenoate + ATP + CoA = 12-hydroxy-(5Z,8Z,10E,14Z)-eicosatetraenoyl-CoA + AMP + diphosphate. It carries out the reaction 15-hydroxy-(5Z,8Z,11Z,13E)-eicosatetraenoate + ATP + CoA = 15-hydroxy-(5Z,8Z,11Z,13E)-eicosatetraenoyl-CoA + AMP + diphosphate. The enzyme catalyses (9Z)-octadecenoate + ATP + CoA = (9Z)-octadecenoyl-CoA + AMP + diphosphate. With respect to regulation, inhibited at high temperature and by arachidonate. Catalyzes the conversion of long-chain fatty acids to their active form acyl-CoAs for both synthesis of cellular lipids, and degradation via beta-oxidation. Preferentially uses palmitoleate, oleate and linoleate. Preferentially activates arachidonate than epoxyeicosatrienoic acids (EETs) or hydroxyeicosatrienoic acids (HETEs). The protein is Long-chain-fatty-acid--CoA ligase 1 of Mus musculus (Mouse).